Here is a 229-residue protein sequence, read N- to C-terminus: Ribulose-phosphate 3-epimerase (229 aa).

Substrate is bound at residue S13. A divalent metal cation-binding residues include H36, D38, and H69. Catalysis depends on D38, which acts as the Proton acceptor. Substrate-binding positions include H69, 145 to 148 (GFGG), 178 to 180 (DGG), and 200 to 201 (GS). D178 contributes to the a divalent metal cation binding site. The active-site Proton donor is D178.

Belongs to the ribulose-phosphate 3-epimerase family. The cofactor is a divalent metal cation.

It catalyses the reaction D-ribulose 5-phosphate = D-xylulose 5-phosphate. It participates in carbohydrate degradation. Catalyzes the reversible epimerization of D-ribulose 5-phosphate to D-xylulose 5-phosphate. The chain is Ribulose-phosphate 3-epimerase from Mycobacterium bovis (strain ATCC BAA-935 / AF2122/97).